The chain runs to 219 residues: Transmembrane protein 179B (219 aa).

The next 4 helical transmembrane spans lie at 9 to 29 (VELA…AAMT), 65 to 85 (FVAG…LFWI), 96 to 116 (GAIG…LVLV), and 167 to 187 (TSSW…VVQW). Residues 198 to 219 (ERGDPEWSSETDALVGSRLSHS) are disordered. 2 positions are modified to phosphoserine: Ser206 and Ser214.

This sequence belongs to the TMEM179 family.

It is found in the membrane. The polypeptide is Transmembrane protein 179B (TMEM179B) (Homo sapiens (Human)).